A 40-amino-acid polypeptide reads, in one-letter code: AQCGAQGGGATCPGGLCCSQWGWCGSTPKYCGAGCQSNCK.

The region spanning 1–40 (AQCGAQGGGATCPGGLCCSQWGWCGSTPKYCGAGCQSNCK) is the Chitin-binding type-1 domain. 4 cysteine pairs are disulfide-bonded: cysteine 3-cysteine 18, cysteine 12-cysteine 24, cysteine 17-cysteine 31, and cysteine 35-cysteine 39.

Post-translationally, not glycosylated.

Functionally, antimicrobial peptide active against plant pathogenic fungi and Gram-negative and -positive bacteria. The sequence is that of Antimicrobial peptide 1 from Fagopyrum esculentum (Common buckwheat).